The primary structure comprises 388 residues: GTPase Obg (388 aa).

One can recognise an Obg domain in the interval 1–159; that stretch reads MKFIDEASIR…RSLRLELLLL (159 aa). The 174-residue stretch at 160–333 folds into the OBG-type G domain; sequence ADVGLLGMPN…LSLKLLDYIA (174 aa). Residues 166–173, 191–195, 213–216, 283–286, and 314–316 each bind GTP; these read GMPNAGKS, FTTLV, DIPG, NKTD, and SAF. 2 residues coordinate Mg(2+): Ser-173 and Thr-193.

The protein belongs to the TRAFAC class OBG-HflX-like GTPase superfamily. OBG GTPase family. Monomer. The cofactor is Mg(2+).

Its subcellular location is the cytoplasm. Functionally, an essential GTPase which binds GTP, GDP and possibly (p)ppGpp with moderate affinity, with high nucleotide exchange rates and a fairly low GTP hydrolysis rate. Plays a role in control of the cell cycle, stress response, ribosome biogenesis and in those bacteria that undergo differentiation, in morphogenesis control. The protein is GTPase Obg of Shewanella denitrificans (strain OS217 / ATCC BAA-1090 / DSM 15013).